We begin with the raw amino-acid sequence, 273 residues long: Dermonecrotic toxin LhSicTox-alphaIA2avii (273 aa).

The active site involves H5. The Mg(2+) site is built by E25 and D27. H41 acts as the Nucleophile in catalysis. 2 disulfides stabilise this stretch: C45–C51 and C47–C190. Residue D85 coordinates Mg(2+).

Belongs to the arthropod phospholipase D family. Class II subfamily. Mg(2+) is required as a cofactor. As to expression, expressed by the venom gland.

The protein resides in the secreted. It catalyses the reaction an N-(acyl)-sphingosylphosphocholine = an N-(acyl)-sphingosyl-1,3-cyclic phosphate + choline. The catalysed reaction is an N-(acyl)-sphingosylphosphoethanolamine = an N-(acyl)-sphingosyl-1,3-cyclic phosphate + ethanolamine. It carries out the reaction a 1-acyl-sn-glycero-3-phosphocholine = a 1-acyl-sn-glycero-2,3-cyclic phosphate + choline. The enzyme catalyses a 1-acyl-sn-glycero-3-phosphoethanolamine = a 1-acyl-sn-glycero-2,3-cyclic phosphate + ethanolamine. In terms of biological role, dermonecrotic toxins cleave the phosphodiester linkage between the phosphate and headgroup of certain phospholipids (sphingolipid and lysolipid substrates), forming an alcohol (often choline) and a cyclic phosphate. This toxin acts on sphingomyelin (SM). It may also act on ceramide phosphoethanolamine (CPE), lysophosphatidylcholine (LPC) and lysophosphatidylethanolamine (LPE), but not on lysophosphatidylserine (LPS), and lysophosphatidylglycerol (LPG). It acts by transphosphatidylation, releasing exclusively cyclic phosphate products as second products. Induces dermonecrosis, hemolysis, increased vascular permeability, edema, inflammatory response, and platelet aggregation. The polypeptide is Dermonecrotic toxin LhSicTox-alphaIA2avii (Loxosceles hirsuta (Recluse spider)).